Consider the following 223-residue polypeptide: UPF0758 protein Cvib_1178 (223 aa).

Residues 100–222 form the MPN domain; sequence KIQGARDVYE…WYSFRENNQL (123 aa). Zn(2+)-binding residues include His-171, His-173, and Asp-184. The JAMM motif signature appears at 171-184; it reads HNHPSGDTEPSNAD.

The protein belongs to the UPF0758 family.

This is UPF0758 protein Cvib_1178 from Chlorobium phaeovibrioides (strain DSM 265 / 1930) (Prosthecochloris vibrioformis (strain DSM 265)).